The following is a 644-amino-acid chain: DNA mismatch repair protein MutL (644 aa).

The disordered stretch occupies residues 336 to 356 (KRNINPLNRDDKTKDKSEYQK). Basic and acidic residues predominate over residues 343-356 (NRDDKTKDKSEYQK).

This sequence belongs to the DNA mismatch repair MutL/HexB family.

This protein is involved in the repair of mismatches in DNA. It is required for dam-dependent methyl-directed DNA mismatch repair. May act as a 'molecular matchmaker', a protein that promotes the formation of a stable complex between two or more DNA-binding proteins in an ATP-dependent manner without itself being part of a final effector complex. The sequence is that of DNA mismatch repair protein MutL from Halothermothrix orenii (strain H 168 / OCM 544 / DSM 9562).